The chain runs to 762 residues: Homeobox-leucine zipper protein MERISTEM L1 (762 aa).

Residues 13–72 (MFDMTPKNSENDLGITGSHEEDFETKSGAEVTMENPLEEELQDPNQRPNKKKRYHRHTQR) are disordered. The span at 30–39 (SHEEDFETKS) shows a compositional bias: basic and acidic residues. Basic residues predominate over residues 60 to 71 (PNKKKRYHRHTQ). Positions 62–121 (KKKRYHRHTQRQIQELESFFKECPHPDDKQRKELSRELSLEPLQVKFWFQNKRTQMKAQH) form a DNA-binding region, homeobox. Residues 110–192 (FQNKRTQMKA…DRISAIAAKY (83 aa)) are a coiled coil. The START domain maps to 253–484 (SEADKPMIVE…LDRQCERLAS (232 aa)).

Belongs to the HD-ZIP homeobox family. Class IV subfamily. As to quaternary structure, interacts with GAI/RGA2, RGA/RGA1/GRS, RGL2/SCL19 and PDF2. Interacts with AIL7/PLT7, ANT, BBM and AIL1.

Its subcellular location is the nucleus. Its function is as follows. Probable transcription factor involved in cell specification and pattern formation during embryogenesis. Binds to the L1 box DNA sequence 5'-TAAATG[CT]A-3'. Plays a role in maintaining the identity of L1 cells, possibly by interacting with their L1 box or other target-gene promoters; binds to the LIP1 gene promoter and stimulates its expression upon imbibition. Acts as a positive regulator of gibberellins (GAs)-regulated epidermal gene expression (e.g. LIP1, LIP2, LTP1, FDH and PDF1). Functionally redundant to PDF2. Seems to promote cell differentiation. The sequence is that of Homeobox-leucine zipper protein MERISTEM L1 from Arabidopsis thaliana (Mouse-ear cress).